A 173-amino-acid chain; its full sequence is Ribosome maturation factor RimM (173 aa).

The 74-residue stretch at 93–166 folds into the PRC barrel domain; that stretch reads EDEYLVSDMI…KMLVDTIEGM (74 aa).

Belongs to the RimM family. Binds ribosomal protein uS19.

It is found in the cytoplasm. An accessory protein needed during the final step in the assembly of 30S ribosomal subunit, possibly for assembly of the head region. Essential for efficient processing of 16S rRNA. May be needed both before and after RbfA during the maturation of 16S rRNA. It has affinity for free ribosomal 30S subunits but not for 70S ribosomes. The sequence is that of Ribosome maturation factor RimM from Fusobacterium nucleatum subsp. nucleatum (strain ATCC 25586 / DSM 15643 / BCRC 10681 / CIP 101130 / JCM 8532 / KCTC 2640 / LMG 13131 / VPI 4355).